We begin with the raw amino-acid sequence, 291 residues long: Light-independent protochlorophyllide reductase iron-sulfur ATP-binding protein (291 aa).

Residues 10–15 (GIGKST) and K39 each bind ATP. Residue S14 coordinates Mg(2+). Residues C95 and C129 each coordinate [4Fe-4S] cluster. 180–181 (NR) lines the ATP pocket.

Belongs to the NifH/BchL/ChlL family. Homodimer. Protochlorophyllide reductase is composed of three subunits; ChlL, ChlN and ChlB. It depends on [4Fe-4S] cluster as a cofactor.

It localises to the plastid. The protein localises to the chloroplast. It catalyses the reaction chlorophyllide a + oxidized 2[4Fe-4S]-[ferredoxin] + 2 ADP + 2 phosphate = protochlorophyllide a + reduced 2[4Fe-4S]-[ferredoxin] + 2 ATP + 2 H2O. Its pathway is porphyrin-containing compound metabolism; chlorophyll biosynthesis (light-independent). In terms of biological role, component of the dark-operative protochlorophyllide reductase (DPOR) that uses Mg-ATP and reduced ferredoxin to reduce ring D of protochlorophyllide (Pchlide) to form chlorophyllide a (Chlide). This reaction is light-independent. The L component serves as a unique electron donor to the NB-component of the complex, and binds Mg-ATP. The protein is Light-independent protochlorophyllide reductase iron-sulfur ATP-binding protein of Pinus thunbergii (Japanese black pine).